We begin with the raw amino-acid sequence, 515 residues long: Maturase K (515 aa).

The protein belongs to the intron maturase 2 family. MatK subfamily.

It is found in the plastid. The protein resides in the chloroplast. Its function is as follows. Usually encoded in the trnK tRNA gene intron. Probably assists in splicing its own and other chloroplast group II introns. The protein is Maturase K of Pinus tabuliformis (Chinese red pine).